Reading from the N-terminus, the 514-residue chain is Carboxysome shell carbonic anhydrase (514 aa).

Residues 1–144 (MNTRNTRSKQ…LTAATEQFSR (144 aa)) form an N-terminal domain region. The segment at 151–397 (DDSASAIGFF…GRYPPNDIGH (247 aa)) is catalytic domain. Cys-173 is a binding site for Zn(2+). The Proton acceptor role is filled by Asp-175. Residues His-242 and Cys-253 each coordinate Zn(2+). Residues 398-514 (AERYISVGDG…GSPIEEVASA (117 aa)) form a C-terminal domain region.

The protein belongs to the beta-class carbonic anhydrase family. CsoSCA subfamily. Homodimer, may form filaments. Zn(2+) is required as a cofactor.

The protein resides in the carboxysome. The catalysed reaction is hydrogencarbonate + H(+) = CO2 + H2O. Its activity is regulated as follows. Carbonic anhydrase activity is inhibited by ethoxyzolamide, dithiothreitol, cyanide, and divalent metal chelators dipicolinic acid and nitrilotriacetic acid. Functionally, reversible hydration of carbon dioxide. Essential for chemolithotrophic carbon dioxide fixation, supplies CO(2) to RuBisCO (ribulose bisphosphate carboxylase, cbbL-cbbS) in the carboxysome. There are estimated to be 40 CsoSCA dimers per carboxysome. Its function is as follows. Unlike beta-carboxysomes, alpha-carboxysomes (Cb) can form without cargo protein. CsoS2 is essential for Cb formation and is also capable of targeting foreign proteins to the Cb. The Cb shell assembles with the aid of CsoS2; CsoS1A, CsoS1B and CsoS1C form the majority of the shell while CsoS4A and CsoS4B form vertices. CsoS1D forms pseudohexamers that probably control metabolite flux into and out of the shell. In Halothiobacillus neapolitanus (strain ATCC 23641 / c2) (Thiobacillus neapolitanus), this protein is Carboxysome shell carbonic anhydrase.